A 213-amino-acid polypeptide reads, in one-letter code: Ephrin-A2 (213 aa).

An N-terminal signal peptide occupies residues 1–24 (MAPAQRPLLPLLLLLLPLPPPPFA). In terms of domain architecture, Ephrin RBD spans 34–174 (SDRYAVYWNR…RLKVYVRPTN (141 aa)). The N-linked (GlcNAc...) asparagine glycan is linked to asparagine 42. Cystine bridges form between cysteine 73–cysteine 114 and cysteine 102–cysteine 163. N-linked (GlcNAc...) asparagine glycosylation is found at asparagine 174 and asparagine 188. A lipid anchor (GPI-anchor amidated asparagine) is attached at asparagine 188. The propeptide at 189-213 (NSCSSPGGCRLFLSTIPVLWTLLGS) is removed in mature form.

The protein belongs to the ephrin family. In terms of assembly, binds to the receptor tyrosine kinases EPHA3, EPHA4 and EPHA5. Interacts with EPHA8; activates EPHA8.

The protein resides in the cell membrane. In terms of biological role, cell surface GPI-bound ligand for Eph receptors, a family of receptor tyrosine kinases which are crucial for migration, repulsion and adhesion during neuronal, vascular and epithelial development. Binds promiscuously Eph receptors residing on adjacent cells, leading to contact-dependent bidirectional signaling into neighboring cells. The signaling pathway downstream of the receptor is referred to as forward signaling while the signaling pathway downstream of the ephrin ligand is referred to as reverse signaling. With the EPHA2 receptor may play a role in bone remodeling through regulation of osteoclastogenesis and osteoblastogenesis. This Homo sapiens (Human) protein is Ephrin-A2 (EFNA2).